A 921-amino-acid polypeptide reads, in one-letter code: Isoleucine--tRNA ligase (921 aa).

Residues 57 to 67 (PYANGDIHMGH) carry the 'HIGH' region motif. Residue Glu-552 coordinates L-isoleucyl-5'-AMP. Positions 593 to 597 (KMSKS) match the 'KMSKS' region motif. Position 596 (Lys-596) interacts with ATP. Cys-887, Cys-890, Cys-907, and Cys-910 together coordinate Zn(2+).

The protein belongs to the class-I aminoacyl-tRNA synthetase family. IleS type 1 subfamily. In terms of assembly, monomer. It depends on Zn(2+) as a cofactor.

It localises to the cytoplasm. It catalyses the reaction tRNA(Ile) + L-isoleucine + ATP = L-isoleucyl-tRNA(Ile) + AMP + diphosphate. Functionally, catalyzes the attachment of isoleucine to tRNA(Ile). As IleRS can inadvertently accommodate and process structurally similar amino acids such as valine, to avoid such errors it has two additional distinct tRNA(Ile)-dependent editing activities. One activity is designated as 'pretransfer' editing and involves the hydrolysis of activated Val-AMP. The other activity is designated 'posttransfer' editing and involves deacylation of mischarged Val-tRNA(Ile). The chain is Isoleucine--tRNA ligase from Halalkalibacterium halodurans (strain ATCC BAA-125 / DSM 18197 / FERM 7344 / JCM 9153 / C-125) (Bacillus halodurans).